Consider the following 477-residue polypeptide: ETS translocation variant 1 (477 aa).

At serine 94 the chain carries Phosphoserine. The tract at residues 128–179 (PQVGMRPSNPPTPSSTPVSPLHHASPNSTHTPKPDRAFPAHLPPSQSIPDSS) is disordered. A phosphoserine; by RPS6KA1 and RPS6KA5 mark is found at serine 191 and serine 216. Lysine 317 participates in a covalent cross-link: Glycyl lysine isopeptide (Lys-Gly) (interchain with G-Cter in SUMO2). Residues 335–415 (LQLWQFLVAL…AGERYVYKFV (81 aa)) constitute a DNA-binding region (ETS).

The protein belongs to the ETS family. In terms of processing, sumoylated. Post-translationally, phosphorylated at Ser-191 and Ser-216 by RPS6KA1 and RPS6KA5; phosphorylation activates transcriptional activity. As to expression, very highly expressed in brain, highly expressed in testis, lung and heart, moderately in spleen, small intestine, pancreas and colon, weakly in liver, prostate and thymus, very weakly in skeletal muscle, kidney and ovary and not in placenta and peripheral blood leukocytes.

It localises to the nucleus. Functionally, transcriptional activator that binds to DNA sequences containing the consensus pentanucleotide 5'-CGGA[AT]-3'. Required for olfactory dopaminergic neuron differentiation; may directly activate expression of tyrosine hydroxylase (TH). The sequence is that of ETS translocation variant 1 from Homo sapiens (Human).